The following is a 225-amino-acid chain: Prepilin leader peptidase/N-methyltransferase (225 aa).

Topologically, residues 1-2 are periplasmic; that stretch reads MT. A helical membrane pass occupies residues 3 to 23; it reads MLLPLFILVGFIADYFVNAIA. At 24–67 the chain is on the cytoplasmic side; sequence YHLSPLEDKTALTFRQVLVHFRQKKYAWHDTVPLILCVAAAIAC. The chain crosses the membrane as a helical span at residues 68–88; the sequence is ALAPFTPIVTGALFLYFCFVL. Over 89-103 the chain is Periplasmic; sequence TLSVIDFRTQLLPDK. A helical membrane pass occupies residues 104–124; the sequence is LTLPLLWLGLVFNAQYGLIDL. Over 125 to 127 the chain is Cytoplasmic; sequence HDA. A helical transmembrane segment spans residues 128-148; sequence VYGAVAGYGVLWCVYWGVWLV. Over 149–174 the chain is Periplasmic; sequence CHKEGLGYGDFKLLAAAGAWCGWQTL. A helical transmembrane segment spans residues 175–195; it reads PMILLIASLGGIGYAIVSQLL. At 196–202 the chain is on the cytoplasmic side; it reads QRRTITT. A helical membrane pass occupies residues 203–223; sequence IAFGPWLALGSMINLGYLAWI. Residues 224–225 are Periplasmic-facing; sequence SY.

The protein belongs to the peptidase A24 family.

The protein localises to the cell inner membrane. The catalysed reaction is Typically cleaves a -Gly-|-Phe- bond to release an N-terminal, basic peptide of 5-8 residues from type IV prepilin, and then N-methylates the new N-terminal amino group, the methyl donor being S-adenosyl-L-methionine.. Plays a role in type II pseudopili formation by proteolytically removing the leader sequence from substrate proteins and subsequently monomethylating the alpha-amino group of the newly exposed N-terminal phenylalanine. Substrates include proteins required for biogenesis of the type II general secretory apparatus. The protein is Prepilin leader peptidase/N-methyltransferase (gspO) of Escherichia coli (strain K12).